A 215-amino-acid chain; its full sequence is Thymidylate kinase (215 aa).

7-14 (GMEGSGKS) serves as a coordination point for ATP.

This sequence belongs to the thymidylate kinase family.

The enzyme catalyses dTMP + ATP = dTDP + ADP. In terms of biological role, phosphorylation of dTMP to form dTDP in both de novo and salvage pathways of dTTP synthesis. The chain is Thymidylate kinase from Nitratidesulfovibrio vulgaris (strain DSM 19637 / Miyazaki F) (Desulfovibrio vulgaris).